The primary structure comprises 265 residues: Phosphonates import ATP-binding protein PhnC 1 (265 aa).

The ABC transporter domain occupies 3-247 (LRLSAIDLRH…HLDTLYANEQ (245 aa)). 36–43 (GPSGAGKT) contributes to the ATP binding site.

The protein belongs to the ABC transporter superfamily. Phosphonates importer (TC 3.A.1.9.1) family. As to quaternary structure, the complex is composed of two ATP-binding proteins (PhnC), two transmembrane proteins (PhnE) and a solute-binding protein (PhnD).

The protein resides in the cell inner membrane. It carries out the reaction phosphonate(out) + ATP + H2O = phosphonate(in) + ADP + phosphate + H(+). Its function is as follows. Part of the ABC transporter complex PhnCDE involved in phosphonates import. Responsible for energy coupling to the transport system. This is Phosphonates import ATP-binding protein PhnC 1 from Pseudomonas syringae pv. tomato (strain ATCC BAA-871 / DC3000).